The following is a 109-amino-acid chain: uncharacterized protein (109 aa).

The chain crosses the membrane as a helical span at residues 75-95 (MALFHTVFILWPHFCGILWTV).

Its subcellular location is the membrane. This is an uncharacterized protein from Saccharomyces cerevisiae (strain ATCC 204508 / S288c) (Baker's yeast).